Here is a 2104-residue protein sequence, read N- to C-terminus: 5'-3' DNA helicase ZGRF1 (2104 aa).

A compositionally biased stretch (polar residues) spans 335–345; it reads SSPIHSSTVDG. Residues 335–359 form a disordered region; sequence SSPIHSSTVDGNDTERKPKAQEDDV. Position 336 is a phosphoserine (Ser-336). Basic and acidic residues predominate over residues 347–356; the sequence is DTERKPKAQE. Phosphoserine occurs at positions 793 and 864. Zn(2+)-binding residues include Cys-1349, His-1351, Cys-1374, and Cys-1382. Residues 1349 to 1391 form a GRF-type zinc finger; the sequence is CHHSQPAKLVMVKKEGPNKGRLFYTCDGPKADRCKFFKWLEDV. The interval 2085–2104 is disordered; sequence VEEKQKKKSEKEKSKDKSHS.

In terms of assembly, interacts with DNA repair protein RAD51; the interaction promotes RAD51 strand exchange activity. Also interacts with DNA repair proteins EXO1 and BRCA1; the interactions are increased following DNA damage induction.

The protein resides in the nucleus. It carries out the reaction ATP + H2O = ADP + phosphate + H(+). The catalysed reaction is Couples ATP hydrolysis with the unwinding of duplex DNA at the replication fork by translocating in the 5'-3' direction. This creates two antiparallel DNA single strands (ssDNA). The leading ssDNA polymer is the template for DNA polymerase III holoenzyme which synthesizes a continuous strand.. 5'-3' DNA helicase which is recruited to sites of DNA damage and promotes repair of replication-blocking DNA lesions through stimulation of homologous recombination (HR). Promotes HR by directly stimulating RAD51-mediated strand exchange activity. Not required to load RAD51 at sites of DNA damage but promotes recombinational repair after RAD51 recruitment. Also promotes HR by positively regulating EXO1-mediated DNA end resection of double-strand breaks. Required for recruitment of replication protein RPA2 to DNA damage sites. Promotes the initiation of the G2/M checkpoint but not its maintenance. Catalyzes Holliday junction branch migration and dissociation of D-loops and DNA flaps. In Homo sapiens (Human), this protein is 5'-3' DNA helicase ZGRF1 (ZGRF1).